A 45-amino-acid chain; its full sequence is MRVSSSIKADPSKGDKLVRRKGRLYVINKKDPNRKQRQAGPARKK.

The tract at residues 1-45 (MRVSSSIKADPSKGDKLVRRKGRLYVINKKDPNRKQRQAGPARKK) is disordered.

It belongs to the bacterial ribosomal protein bL36 family.

The polypeptide is Large ribosomal subunit protein bL36 (Chlamydia trachomatis serovar L2 (strain ATCC VR-902B / DSM 19102 / 434/Bu)).